The primary structure comprises 468 residues: 3-isopropylmalate dehydratase large subunit (468 aa).

3 residues coordinate [4Fe-4S] cluster: Cys347, Cys407, and Cys410.

Belongs to the aconitase/IPM isomerase family. LeuC type 1 subfamily. In terms of assembly, heterodimer of LeuC and LeuD. [4Fe-4S] cluster is required as a cofactor.

The catalysed reaction is (2R,3S)-3-isopropylmalate = (2S)-2-isopropylmalate. It participates in amino-acid biosynthesis; L-leucine biosynthesis; L-leucine from 3-methyl-2-oxobutanoate: step 2/4. Catalyzes the isomerization between 2-isopropylmalate and 3-isopropylmalate, via the formation of 2-isopropylmaleate. The sequence is that of 3-isopropylmalate dehydratase large subunit from Campylobacter jejuni subsp. jejuni serotype O:23/36 (strain 81-176).